The sequence spans 719 residues: Phosphoribosylformylglycinamidine synthase subunit PurL (719 aa).

Residue His-45 is part of the active site. Residues Tyr-48 and Lys-87 each coordinate ATP. Glu-89 provides a ligand contact to Mg(2+). Residues 90–93 (SHNH) and Arg-112 each bind substrate. Residue His-91 is the Proton acceptor of the active site. Asp-113 provides a ligand contact to Mg(2+). Residue Gln-236 participates in substrate binding. A Mg(2+)-binding site is contributed by Asp-264. 308–310 (ESQ) lines the substrate pocket. Residues Asn-493 and Gly-530 each coordinate ATP. Residue Asn-531 coordinates Mg(2+). Ser-533 serves as a coordination point for substrate.

It belongs to the FGAMS family. As to quaternary structure, monomer. Part of the FGAM synthase complex composed of 1 PurL, 1 PurQ and 2 PurS subunits.

The protein resides in the cytoplasm. The catalysed reaction is N(2)-formyl-N(1)-(5-phospho-beta-D-ribosyl)glycinamide + L-glutamine + ATP + H2O = 2-formamido-N(1)-(5-O-phospho-beta-D-ribosyl)acetamidine + L-glutamate + ADP + phosphate + H(+). Its pathway is purine metabolism; IMP biosynthesis via de novo pathway; 5-amino-1-(5-phospho-D-ribosyl)imidazole from N(2)-formyl-N(1)-(5-phospho-D-ribosyl)glycinamide: step 1/2. Its function is as follows. Part of the phosphoribosylformylglycinamidine synthase complex involved in the purines biosynthetic pathway. Catalyzes the ATP-dependent conversion of formylglycinamide ribonucleotide (FGAR) and glutamine to yield formylglycinamidine ribonucleotide (FGAM) and glutamate. The FGAM synthase complex is composed of three subunits. PurQ produces an ammonia molecule by converting glutamine to glutamate. PurL transfers the ammonia molecule to FGAR to form FGAM in an ATP-dependent manner. PurS interacts with PurQ and PurL and is thought to assist in the transfer of the ammonia molecule from PurQ to PurL. The chain is Phosphoribosylformylglycinamidine synthase subunit PurL from Novosphingobium aromaticivorans (strain ATCC 700278 / DSM 12444 / CCUG 56034 / CIP 105152 / NBRC 16084 / F199).